Consider the following 243-residue polypeptide: DNA repair protein RecO (243 aa).

The protein belongs to the RecO family.

Its function is as follows. Involved in DNA repair and RecF pathway recombination. The protein is DNA repair protein RecO of Bartonella quintana (strain Toulouse) (Rochalimaea quintana).